The sequence spans 118 residues: Probable FK506-binding protein (118 aa).

The PPIase FKBP-type domain maps to 33 to 118; the sequence is GGEVEVHYVG…LVFIIDLISA (86 aa).

The protein belongs to the FKBP-type PPIase family.

It catalyses the reaction [protein]-peptidylproline (omega=180) = [protein]-peptidylproline (omega=0). PPIases accelerate the folding of proteins. The polypeptide is Probable FK506-binding protein (Corynebacterium glutamicum (strain ATCC 13032 / DSM 20300 / JCM 1318 / BCRC 11384 / CCUG 27702 / LMG 3730 / NBRC 12168 / NCIMB 10025 / NRRL B-2784 / 534)).